We begin with the raw amino-acid sequence, 189 residues long: 3-hydroxyanthranilate 3,4-dioxygenase (189 aa).

Arg-50 is a binding site for O2. The Fe cation site is built by His-54, Glu-60, and His-102. Glu-60 lines the substrate pocket. Substrate contacts are provided by Arg-106 and Glu-116. A divalent metal cation is bound by residues Cys-131, Cys-136, Cys-170, and Cys-173.

The protein belongs to the 3-HAO family. Requires Fe(2+) as cofactor.

The protein resides in the cytoplasm. It carries out the reaction 3-hydroxyanthranilate + O2 = (2Z,4Z)-2-amino-3-carboxymuconate 6-semialdehyde. It participates in cofactor biosynthesis; NAD(+) biosynthesis; quinolinate from L-kynurenine: step 3/3. Catalyzes the oxidative ring opening of 3-hydroxyanthranilate to 2-amino-3-carboxymuconate semialdehyde, which spontaneously cyclizes to quinolinate. The sequence is that of 3-hydroxyanthranilate 3,4-dioxygenase (bna1) from Aspergillus niger (strain ATCC MYA-4892 / CBS 513.88 / FGSC A1513).